Here is a 591-residue protein sequence, read N- to C-terminus: Glutathione S-transferase T2 (591 aa).

Residues 1–82 enclose the GST N-terminal domain; the sequence is MKLKVYADRM…YLSSAYASVV (82 aa). Glutathione-binding positions include 11 to 12, 40 to 41, 53 to 54, and 66 to 67; these read SQ, QL, KV, and ES. Positions 89–226 constitute a GST C-terminal domain; it reads DLSKRAKIHS…EVLFRAKDRF (138 aa). The disordered stretch occupies residues 229 to 272; it reads QREMATASKPGPQSKIIQFSSIGGTSDGPNLVQDTTDRKARRRK. The segment covering 243 to 262 has biased composition (polar residues); it reads KIIQFSSIGGTSDGPNLVQD. Residues 265–338 form the Myb-like domain; that stretch reads DRKARRRKWS…HCRQRWRKIN (74 aa).

Belongs to the GST superfamily. Theta family.

The protein localises to the peroxisome. The catalysed reaction is RX + glutathione = an S-substituted glutathione + a halide anion + H(+). Its function is as follows. May be involved in the conjugation of reduced glutathione to a wide number of exogenous and endogenous hydrophobic electrophiles and have a detoxification role against certain herbicides. This Arabidopsis thaliana (Mouse-ear cress) protein is Glutathione S-transferase T2 (GSTT2).